A 1057-amino-acid polypeptide reads, in one-letter code: Probable E3 ubiquitin-protein ligase HERC4 (1057 aa).

7 RCC1 repeats span residues 1-51 (MLCW…FVLD), 52-101 (DGTV…ALND), 102-154 (KGQV…ALSK), 156-207 (SEVF…VLTL), 208-259 (SGAI…ALTK), 261-311 (GGVF…AFVP), and 313-366 (SGRI…CVKR). The region spanning 730 to 1057 (KNIDYKKPLK…IDHNEGFSLI (328 aa)) is the HECT domain. The Glycyl thioester intermediate role is filled by Cys-1025.

The protein localises to the cytoplasm. It is found in the cytosol. It carries out the reaction S-ubiquitinyl-[E2 ubiquitin-conjugating enzyme]-L-cysteine + [acceptor protein]-L-lysine = [E2 ubiquitin-conjugating enzyme]-L-cysteine + N(6)-ubiquitinyl-[acceptor protein]-L-lysine.. It participates in protein modification; protein ubiquitination. Its function is as follows. Probable E3 ubiquitin-protein ligase involved in either protein trafficking or in the distribution of cellular structures. Required for spermatozoon maturation and fertility, and for the removal of the cytoplasmic droplet of the spermatozoon. E3 ubiquitin-protein ligases accept ubiquitin from an E2 ubiquitin-conjugating enzyme in the form of a thioester and then directly transfer it to targeted substrates. The chain is Probable E3 ubiquitin-protein ligase HERC4 (Herc4) from Rattus norvegicus (Rat).